The sequence spans 218 residues: Octanoyltransferase (218 aa).

A BPL/LPL catalytic domain is found at 31–206 (REAADEVWLV…QLVKHLDYAE (176 aa)). Residues 70-77 (RGGQVTYH), 137-139 (SLG), and 150-152 (GLA) contribute to the substrate site. Cys-168 serves as the catalytic Acyl-thioester intermediate.

This sequence belongs to the LipB family.

Its subcellular location is the cytoplasm. It catalyses the reaction octanoyl-[ACP] + L-lysyl-[protein] = N(6)-octanoyl-L-lysyl-[protein] + holo-[ACP] + H(+). Its pathway is protein modification; protein lipoylation via endogenous pathway; protein N(6)-(lipoyl)lysine from octanoyl-[acyl-carrier-protein]: step 1/2. Its function is as follows. Catalyzes the transfer of endogenously produced octanoic acid from octanoyl-acyl-carrier-protein onto the lipoyl domains of lipoate-dependent enzymes. Lipoyl-ACP can also act as a substrate although octanoyl-ACP is likely to be the physiological substrate. The chain is Octanoyltransferase from Pseudomonas syringae pv. syringae (strain B728a).